Consider the following 167-residue polypeptide: Photosystem I assembly protein Ycf3 (167 aa).

3 TPR repeats span residues 35–68 (AFTY…EVDA), 72–105 (SYIF…NPSL), and 120–153 (GEQA…APTN).

It belongs to the Ycf3 family.

Its subcellular location is the plastid. It is found in the chloroplast thylakoid membrane. In terms of biological role, essential for the assembly of the photosystem I (PSI) complex. May act as a chaperone-like factor to guide the assembly of the PSI subunits. The polypeptide is Photosystem I assembly protein Ycf3 (Pleurastrum terricola (Filamentous green alga)).